The primary structure comprises 68 residues: Conotoxin Lt5.11 (68 aa).

A signal peptide spans 1–19 (MLCLPVFIILLLLASPAAP). Positions 20–54 (KSLETRIQNDLIRAGLTDADLKTEKGFLSGLLNVA) are excised as a propeptide.

It belongs to the conotoxin T superfamily. In terms of processing, contains 2 disulfide bonds that can be either 'C1-C3, C2-C4' or 'C1-C4, C2-C3', since these disulfide connectivities have been observed for conotoxins with cysteine framework V (for examples, see AC P0DQQ7 and AC P81755). As to expression, expressed by the venom duct.

The protein resides in the secreted. This Conus litteratus (Lettered cone) protein is Conotoxin Lt5.11.